Reading from the N-terminus, the 307-residue chain is Nucleotide-binding protein Arth_2083 (307 aa).

An ATP-binding site is contributed by 30–37 (GMSGAGRS). Position 81-84 (81-84 (DVRS)) interacts with GTP.

Belongs to the RapZ-like family.

In terms of biological role, displays ATPase and GTPase activities. The sequence is that of Nucleotide-binding protein Arth_2083 from Arthrobacter sp. (strain FB24).